Consider the following 138-residue polypeptide: uncharacterized protein (138 aa).

The interval 84 to 104 (PPKKTSPATSSSLKPRPGPRG) is disordered. Positions 85 to 98 (PKKTSPATSSSLKP) are enriched in low complexity.

To M.pneumoniae MPN_413 and MPN_463.

This is an uncharacterized protein from Mycoplasma pneumoniae (strain ATCC 29342 / M129 / Subtype 1) (Mycoplasmoides pneumoniae).